Here is a 636-residue protein sequence, read N- to C-terminus: 1-deoxy-D-xylulose-5-phosphate synthase (636 aa).

Residues His77 and 118-120 (GHS) each bind thiamine diphosphate. Residue Asp149 participates in Mg(2+) binding. Residues 150 to 151 (GA), Asn178, Tyr290, and Glu375 each bind thiamine diphosphate. A Mg(2+)-binding site is contributed by Asn178.

It belongs to the transketolase family. DXPS subfamily. In terms of assembly, homodimer. Requires Mg(2+) as cofactor. The cofactor is thiamine diphosphate.

The enzyme catalyses D-glyceraldehyde 3-phosphate + pyruvate + H(+) = 1-deoxy-D-xylulose 5-phosphate + CO2. Its pathway is metabolic intermediate biosynthesis; 1-deoxy-D-xylulose 5-phosphate biosynthesis; 1-deoxy-D-xylulose 5-phosphate from D-glyceraldehyde 3-phosphate and pyruvate: step 1/1. Functionally, catalyzes the acyloin condensation reaction between C atoms 2 and 3 of pyruvate and glyceraldehyde 3-phosphate to yield 1-deoxy-D-xylulose-5-phosphate (DXP). The sequence is that of 1-deoxy-D-xylulose-5-phosphate synthase from Cytophaga hutchinsonii (strain ATCC 33406 / DSM 1761 / CIP 103989 / NBRC 15051 / NCIMB 9469 / D465).